We begin with the raw amino-acid sequence, 219 residues long: Salivary IL-4-inducing protein (219 aa).

An N-terminal signal peptide occupies residues 1-19 (MKYLLTLLMALSLVNLMLT). A disordered region spans residues 19–109 (TRPTPEDDGG…KNDPRETYNK (91 aa)). The span at 30 to 43 (SEEPQTQETTGETT) shows a compositional bias: low complexity. A compositionally biased stretch (basic and acidic residues) spans 72–107 (DDTAKKEDDGESKDGEGSEKSDKEKGEPKNDPRETY).

Salivary gland (at protein level).

The protein resides in the secreted. Induces expression of IL4 in host skin by diverting host CD4 cells away from Th1 and towards Th2 responsiveness. Induces expression of IL10 in host skin. Down-regulates expression of IL12B, IFN-gamma (IFNG) and TNF-alpha (TNF) in host skin. The chain is Salivary IL-4-inducing protein from Aedes aegypti (Yellowfever mosquito).